The following is a 406-amino-acid chain: 4-hydroxy-3-methylbut-2-en-1-yl diphosphate synthase (ferredoxin) (406 aa).

[4Fe-4S] cluster-binding residues include Cys-315, Cys-318, Cys-349, and Glu-356.

The protein belongs to the IspG family. [4Fe-4S] cluster is required as a cofactor.

The enzyme catalyses (2E)-4-hydroxy-3-methylbut-2-enyl diphosphate + 2 oxidized [2Fe-2S]-[ferredoxin] + H2O = 2-C-methyl-D-erythritol 2,4-cyclic diphosphate + 2 reduced [2Fe-2S]-[ferredoxin] + H(+). Its pathway is isoprenoid biosynthesis; isopentenyl diphosphate biosynthesis via DXP pathway; isopentenyl diphosphate from 1-deoxy-D-xylulose 5-phosphate: step 5/6. Converts 2C-methyl-D-erythritol 2,4-cyclodiphosphate (ME-2,4cPP) into 1-hydroxy-2-methyl-2-(E)-butenyl 4-diphosphate. This chain is 4-hydroxy-3-methylbut-2-en-1-yl diphosphate synthase (ferredoxin), found in Gloeothece citriformis (strain PCC 7424) (Cyanothece sp. (strain PCC 7424)).